The sequence spans 365 residues: TD and POZ domain-containing protein 1-like (365 aa).

The 131-residue stretch at 19–149 (KFCYKWTISN…EDQLTICCKV (131 aa)) folds into the MATH domain. A BTB domain is found at 188–255 (TDCCLLVAGH…IYTGKAPYLH (68 aa)).

Belongs to the Tdpoz family.

The polypeptide is TD and POZ domain-containing protein 1-like (Mus musculus (Mouse)).